A 299-amino-acid polypeptide reads, in one-letter code: Hemolysin C homolog (299 aa).

CBS domains are found at residues Met80–Leu142 and Leu145–Glu202.

The protein belongs to the UPF0053 family. Hemolysin C subfamily.

This chain is Hemolysin C homolog (tlyC), found in Rickettsia massiliae (strain Mtu5).